A 782-amino-acid polypeptide reads, in one-letter code: E3 UFM1-protein ligase 1 homolog (782 aa).

A disordered region spans residues asparagine 404–lysine 477. Residues lysine 443–alanine 453 show a composition bias toward basic residues.

The protein belongs to the UFL1 family.

E3 UFM1-protein ligase that mediates ufmylation of target proteins. This is E3 UFM1-protein ligase 1 homolog from Drosophila erecta (Fruit fly).